The sequence spans 271 residues: 2-dehydro-3-deoxyphosphooctonate aldolase (271 aa).

The protein belongs to the KdsA family.

The protein localises to the cytoplasm. It carries out the reaction D-arabinose 5-phosphate + phosphoenolpyruvate + H2O = 3-deoxy-alpha-D-manno-2-octulosonate-8-phosphate + phosphate. It functions in the pathway carbohydrate biosynthesis; 3-deoxy-D-manno-octulosonate biosynthesis; 3-deoxy-D-manno-octulosonate from D-ribulose 5-phosphate: step 2/3. The protein operates within bacterial outer membrane biogenesis; lipopolysaccharide biosynthesis. This Campylobacter jejuni subsp. jejuni serotype O:23/36 (strain 81-176) protein is 2-dehydro-3-deoxyphosphooctonate aldolase.